The primary structure comprises 445 residues: MANRKYFGTDGVRGKVGAYPITPDFALKLGWAAGKVLSSQGSKMVLIGKDTRISGYMLESALEAGLAAAGLSAAFTGPMPTPAIAYLTRTFRAEAGIVISASHNPYYDNGIKFFSAKGTKLPDEIEEAIEAMLEQPMDCVESAELGKASRINDAAGRYIEFCKGTFPAHLGLEGYKIVIDCANGATYHIAPNVFRELGAEVIEIGTDPNGLNINEKCGATDVTALQAKVVETKADVGLAYDGDGDRIMMVDHLGNKVDGDQILFIIAREALRSGQLKGGVVGTLMSNMSLEIALKMLGVPFLRANVGDRYVLEKMLENDWTLGGENSGHIIIADKNTTGDGIVASLAVLAAMAQHKLSLNELASAVKLFPQVLINVRFAGGENPLESDAVKSVAAEVEKRLEGKGRILLRKSGTEPLIRVMVECQDAELAQQCAEEIAEAVKKIN.

The Phosphoserine intermediate role is filled by Ser102. Residues Ser102, Asp241, Asp243, and Asp245 each contribute to the Mg(2+) site. Ser102 carries the post-translational modification Phosphoserine.

This sequence belongs to the phosphohexose mutase family. It depends on Mg(2+) as a cofactor. Activated by phosphorylation.

It carries out the reaction alpha-D-glucosamine 1-phosphate = D-glucosamine 6-phosphate. Functionally, catalyzes the conversion of glucosamine-6-phosphate to glucosamine-1-phosphate. This chain is Phosphoglucosamine mutase, found in Haemophilus influenzae (strain PittEE).